A 417-amino-acid chain; its full sequence is Sterile alpha motif domain-containing protein 14 (417 aa).

The disordered stretch occupies residues 36–302; sequence QLLAKGRRHR…GGPRQETKCS (267 aa). The span at 40–49 shows a compositional bias: basic residues; that stretch reads KGRRHRPSRS. S84 and S108 each carry phosphoserine. A compositionally biased stretch (low complexity) spans 138–153; that stretch reads SGSPPRSAPSSDSSPS. Positions 159–173 are enriched in basic and acidic residues; that stretch reads PRAEPHSEDDSRDAS. Phosphoserine is present on residues S173 and S179. Composition is skewed to low complexity over residues 244-260 and 276-289; these read SGKG…PTCS and STLS…SSSP. Position 279 is a phosphoserine (S279). Residue T283 is modified to Phosphothreonine. The 64-residue stretch at 326-389 folds into the SAM domain; it reads WTSQQVGQWL…KRKLKELAAA (64 aa). Positions 375–416 form a coiled coil; the sequence is DRALVKRKLKELAAAAEKERKAQEKTAKQREKLRRRENDAKK. The disordered stretch occupies residues 390–417; the sequence is AEKERKAQEKTAKQREKLRRRENDAKKS.

This is Sterile alpha motif domain-containing protein 14 (Samd14) from Mus musculus (Mouse).